The following is a 1203-amino-acid chain: DNA-directed RNA polymerase subunit beta (1203 aa).

Residues 1174 to 1195 are compositionally biased toward basic and acidic residues; the sequence is AAQEAKAAFEAEEAEKATKAEA. The disordered stretch occupies residues 1174-1203; it reads AAQEAKAAFEAEEAEKATKAEATEEAAEQE.

This sequence belongs to the RNA polymerase beta chain family. As to quaternary structure, the RNAP catalytic core consists of 2 alpha, 1 beta, 1 beta' and 1 omega subunit. When a sigma factor is associated with the core the holoenzyme is formed, which can initiate transcription.

The catalysed reaction is RNA(n) + a ribonucleoside 5'-triphosphate = RNA(n+1) + diphosphate. DNA-dependent RNA polymerase catalyzes the transcription of DNA into RNA using the four ribonucleoside triphosphates as substrates. In Streptococcus pneumoniae serotype 19F (strain G54), this protein is DNA-directed RNA polymerase subunit beta.